We begin with the raw amino-acid sequence, 258 residues long: Exosome complex component Rrp41 (258 aa).

It belongs to the RNase PH family. Rrp41 subfamily. Component of the archaeal exosome complex. Forms a hexameric ring-like arrangement composed of 3 Rrp41-Rrp42 heterodimers. The hexameric ring associates with a trimer of Rrp4 and/or Csl4 subunits.

Its subcellular location is the cytoplasm. Its function is as follows. Catalytic component of the exosome, which is a complex involved in RNA degradation. Has 3'-&gt;5' exoribonuclease activity. Can also synthesize heteromeric RNA-tails. The sequence is that of Exosome complex component Rrp41 from Archaeoglobus fulgidus (strain ATCC 49558 / DSM 4304 / JCM 9628 / NBRC 100126 / VC-16).